Consider the following 847-residue polypeptide: MNGGGANITYASRKRRKPVQKTVKPIPAEGIKSNPSKRHRDRLNTELDRLASLLPFPQDVINKLDKLSVLRLSVSYLRAKSFFDVALKSSSADRNGGQDPCRAKFGEGLNLQEGEFLLQALNGFVLVVTVDALVFYASSTIQDYLGFQQSDVIHQSVYELIHTEDRAEFQRQLHWALNPSQCTDPGQGADETHGLPQPVYYNPDQLPPENSSFMERCFICRLRCLLDNSSGFLAMNFQGRLKFLHGQNKKGKDGSLLPPQLALFAIATPLQPPSILEIRTKNFIFRTKHKLDFTPTGCDAKGQIVLGYTEAELCMRGSGYQFIHAADMLYCAESHIRMIKTGESGLAVFRLLTKDNRWAWVQSNARFIYKNGRPDFIIATQRPLTDEEGREHLLKRNTKLPFMFTTGEAVLYEMTSPFPPIMDPLPIRPKSGTCGKDSATKPTPSKDSVHPSSLLSALMQQDESIYLYPPSSNAPFERNFFTESLNECSNWPENVASVAGGSVLKHEQIGQSQEVSPAFSGDQTVLFPDNKNCDLYNIMKNLGVDFEDIKNMQNEEFFGADFSGEVDFRDIDITDEILTYVQDSLNKSPFGSPGYQPQPATALNSSCMVQERLQLGPPQQPPCRSEQATVEPQQQLCQKMEHMQVNSMFANWSANQPVPFSEPQQDLQPYSVFTDFHTADQAFPYTAAMNTMPYTQNFTPCNQTVAPQHSRCTQLDFAMGNFDSSPYPSTSNLEDFVTCLQVPDRQTHGGNPQSAMVAPQTCYAGAVSMYQCQPGPAHTLMGQMQCEPPVPGPEAFLNKFPNGGMLNETYPADLHDINNTVASTHLPPLHHPSEARPFPDLASGRLL.

Residues 1–39 are disordered; it reads MNGGGANITYASRKRRKPVQKTVKPIPAEGIKSNPSKRH. 2 consecutive short sequence motifs (nuclear localization signal) follow at residues 13–16 and 37–42; these read RKRR and KRHRDR. The bHLH domain maps to 27-80; sequence PAEGIKSNPSKRHRDRLNTELDRLASLLPFPQDVINKLDKLSVLRLSVSYLRAK. Positions 38 to 66 are DNA-binding; it reads RHRDRLNTELDRLASLLPFPQDVINKLDK. Required for maintaining the overall integrity of the AHR:ARNT heterodimer and its transcriptional activity regions lie at residues 50–82, 117–125, and 264–266; these read LASLLPFPQDVINKLDKLSVLRLSVSYLRAKSF, LLQALNGFV, and FAI. A Nuclear export signal motif is present at residues 64–72; it reads LDKLSVLRL. The PAS 1 domain maps to 120–173; it reads ALNGFVLVVTVDALVFYASSTIQDYLGFQQSDVIHQSVYELIHTEDRAEFQRQL. The region spanning 281 to 336 is the PAS 2 domain; it reads KNFIFRTKHKLDFTPTGCDAKGQIVLGYTEAELCMRGSGYQFIHAADMLYCAESHI. One can recognise a PAC domain in the interval 346 to 384; sequence LAVFRLLTKDNRWAWVQSNARFIYKNGRPDFIIATQRPL. Disordered regions lie at residues 430–452 and 825–847; these read KSGTCGKDSATKPTPSKDSVHPS and HLPPLHHPSEARPFPDLASGRLL. A compositionally biased stretch (polar residues) spans 440–452; that stretch reads TKPTPSKDSVHPS.

As to quaternary structure, homodimer. Heterodimer; efficient DNA binding requires dimerization with another bHLH protein. Binds MYBBP1A. Interacts with coactivators including SRC-1, RIP140 and NOCA7, and with the corepressor SMRT. Interacts with NEDD8 and IVNS1ABP. Interacts with BMAL1. Interacts with HSP90AB1. Interacts with ARNT; the heterodimer ARNT:AHR binds to core DNA sequence 5'-TGCGTG-3' within the dioxin response element (DRE) of target gene promoters and activates their transcription. Interacts with TIPARP; leading to mono-ADP-ribosylation of AHR and subsequent inhibition of AHR. Post-translationally, mono-ADP-ribosylated, leading to inhibit transcription activator activity of AHR.

It is found in the cytoplasm. It localises to the nucleus. Its function is as follows. Ligand-activated transcription factor that enables cells to adapt to changing conditions by sensing compounds from the environment, diet, microbiome and cellular metabolism, and which plays important roles in development, immunity and cancer. Upon ligand binding, translocates into the nucleus, where it heterodimerizes with ARNT and induces transcription by binding to xenobiotic response elements (XRE). Regulates a variety of biological processes, including angiogenesis, hematopoiesis, drug and lipid metabolism, cell motility and immune modulation. Xenobiotics can act as ligands: upon xenobiotic-binding, activates the expression of multiple phase I and II xenobiotic chemical metabolizing enzyme genes (such as the CYP1A1 gene). Mediates biochemical and toxic effects of halogenated aromatic hydrocarbons. Next to xenobiotics, natural ligands derived from plants, microbiota, and endogenous metabolism are potent AHR agonists. Tryptophan (Trp) derivatives constitute an important class of endogenous AHR ligands. Acts as a negative regulator of anti-tumor immunity: indoles and kynurenic acid generated by Trp catabolism act as ligand and activate AHR, thereby promoting AHR-driven cancer cell motility and suppressing adaptive immunity. Regulates the circadian clock by inhibiting the basal and circadian expression of the core circadian component PER1. Inhibits PER1 by repressing the CLOCK-BMAL1 heterodimer mediated transcriptional activation of PER1. The heterodimer ARNT:AHR binds to core DNA sequence 5'-TGCGTG-3' within the dioxin response element (DRE) of target gene promoters and activates their transcription. The chain is Aryl hydrocarbon receptor (AHR) from Oryctolagus cuniculus (Rabbit).